The primary structure comprises 280 residues: UPF0276 protein NGO_1946 (280 aa).

This sequence belongs to the UPF0276 family.

The sequence is that of UPF0276 protein NGO_1946 from Neisseria gonorrhoeae (strain ATCC 700825 / FA 1090).